A 1463-amino-acid chain; its full sequence is Regulating synaptic membrane exocytosis protein 1 (1463 aa).

The segment at 1–26 (MSSAVGPRGPRPPTVPPPMQELPDLS) is disordered. Positions 9 to 20 (GPRPPTVPPPMQ) are enriched in pro residues. Residues 22 to 205 (LPDLSHLTEE…TKSGAWFFGS (184 aa)) form the RabBD domain. The segment at 133–193 (KDDAPTCGIC…VCNLCRKQQE (61 aa)) adopts an FYVE-type zinc-finger fold. Residues C139, C142, C155, C158, C163, C166, C185, and C188 each coordinate Zn(2+). Positions 205-393 (SGPQQPSQDG…DVELESESVS (189 aa)) are disordered. Residues 206–222 (GPQQPSQDGTLSDTATG) show a composition bias toward polar residues. Basic and acidic residues predominate over residues 227–240 (VPREKKARLQERSR). A compositionally biased stretch (polar residues) spans 241-256 (SQTPLSTAAVSSQDTA). Over residues 327 to 372 (ADERERKERRETRRLEKGRSQDYPDRLEKREDGRVAEDEKQRKEEE) the composition is skewed to basic and acidic residues. Over residues 381–391 (SCEDVELESES) the composition is skewed to acidic residues. S413 is subject to Phosphoserine. A PDZ domain is found at 440–526 (RTTMPKESGA…EPQVEIIVSR (87 aa)). The disordered stretch occupies residues 533–567 (RIPESSHPPLESSSSSFESQKMERPSISVISPTSP). Residues 535 to 551 (PESSHPPLESSSSSFES) are compositionally biased toward low complexity. Residues S563 and S566 each carry the phosphoserine modification. Positions 577–700 (LPGQLSVKLW…ALLDDEPHWY (124 aa)) constitute a C2 1 domain. Residues 705 to 856 (HDESSLPLPQ…YSSEPDSELL (152 aa)) form a disordered region. S716 bears the Phosphoserine mark. A compositionally biased stretch (polar residues) spans 770 to 779 (ATTLTVPEQQ). Position 812 is a phosphoserine (S812). The segment covering 827 to 844 (RHHDASRSLADHRSRHAE) has biased composition (basic and acidic residues). Position 866 is a phosphoserine (S866). A disordered region spans residues 874 to 1049 (SELQPSLDRA…RQLPQVPVRS (176 aa)). The segment covering 928–941 (PENDRHSRKSERSS) has biased composition (basic and acidic residues). Positions 1021-1035 (QGSPTQSPPADTSFG) are enriched in polar residues. Residue S1023 is modified to Phosphoserine. T1025 carries the post-translational modification Phosphothreonine. A phosphoserine mark is found at S1027, S1079, S1081, S1082, S1110, S1111, and S1113. Residues 1104–1161 (DNASAKSSDSDVSDVSAISRASSTSRLSSTSFMSEQSERPRGRISSFTPKMQGRRMGT) form a disordered region. A compositionally biased stretch (low complexity) spans 1116–1137 (SDVSAISRASSTSRLSSTSFMS). S1187 is subject to Phosphoserine. The disordered stretch occupies residues 1216–1266 (RSRSTSQLSQTESGHKKLKSTIQRSTETGMAAEMRKMVRQPSRESTDGSIN). Over residues 1248-1261 (EMRKMVRQPSREST) the composition is skewed to basic and acidic residues. Residues 1309 to 1427 (AMGDIQIGME…DLSSMVIGWY (119 aa)) form the C2 2 domain. 4 positions are modified to phosphoserine: S1448, S1451, S1454, and S1463.

Binds SNAP25, SYT1 and CACNA1B. Interaction with SYT1 is enhanced by calcium ions. Interaction with SNAP25 is weaker in the presence of calcium ions. Interacts with TSPOAP1 and RIMBP2; interacts with PPFIA3 and PPFIA4. Interacts with ERC1. Interacts with RAB3A, RAB3B and RAB3D that have been activated by GTP-binding. Interacts with RAB3C, RAB10, RAB26 and RAB37. Binds UNC13A. Post-translationally, phosphorylated by BRSK1.

It localises to the cell membrane. The protein localises to the synapse. Its subcellular location is the presynaptic cell membrane. Its function is as follows. Rab effector involved in exocytosis. May act as scaffold protein that regulates neurotransmitter release at the active zone. Essential for maintaining normal probability of neurotransmitter release and for regulating release during short-term synaptic plasticity. Plays a role in dendrite formation by melanocytes. The sequence is that of Regulating synaptic membrane exocytosis protein 1 (Rims1) from Mus musculus (Mouse).